A 250-amino-acid polypeptide reads, in one-letter code: Large ribosomal subunit protein uL30 (250 aa).

The protein belongs to the universal ribosomal protein uL30 family.

In Yarrowia lipolytica (strain CLIB 122 / E 150) (Yeast), this protein is Large ribosomal subunit protein uL30 (RPL7).